The following is a 364-amino-acid chain: F-box protein At1g59680 (364 aa).

The region spanning 2–49 is the F-box domain; that stretch reads TTMSDLSVDLVGEILSRVPLTSLSAVRCTCKSWNTLSKHQIFGKAELA.

This Arabidopsis thaliana (Mouse-ear cress) protein is F-box protein At1g59680.